The chain runs to 145 residues: Endoribonuclease YbeY (145 aa).

Zn(2+)-binding residues include histidine 109, histidine 113, and histidine 119.

This sequence belongs to the endoribonuclease YbeY family. Zn(2+) serves as cofactor.

Its subcellular location is the cytoplasm. Single strand-specific metallo-endoribonuclease involved in late-stage 70S ribosome quality control and in maturation of the 3' terminus of the 16S rRNA. This Ruthia magnifica subsp. Calyptogena magnifica protein is Endoribonuclease YbeY.